The primary structure comprises 226 residues: ATP synthase F(0) complex subunit a (226 aa).

The next 6 membrane-spanning stretches (helical) occupy residues 6–26, 68–88, 97–117, 138–158, 164–184, and 189–209; these read FASFAAPTILGLPAAVLIILF, WSLMLVSLIIFITTTNLLGLL, QLSMNLAMAIPLWAGAVVMGF, IPMLVIIETISLLIQPMALAV, ITAGHLLMHLIGSATLALSTI, and ALIIFTILILLTILEIAVALI.

Belongs to the ATPase A chain family. Component of the ATP synthase complex composed at least of ATP5F1A/subunit alpha, ATP5F1B/subunit beta, ATP5MC1/subunit c (homooctomer), MT-ATP6/subunit a, MT-ATP8/subunit 8, ATP5ME/subunit e, ATP5MF/subunit f, ATP5MG/subunit g, ATP5MK/subunit k, ATP5MJ/subunit j, ATP5F1C/subunit gamma, ATP5F1D/subunit delta, ATP5F1E/subunit epsilon, ATP5PF/subunit F6, ATP5PB/subunit b, ATP5PD/subunit d, ATP5PO/subunit OSCP. ATP synthase complex consists of a soluble F(1) head domain (subunits alpha(3) and beta(3)) - the catalytic core - and a membrane F(0) domain - the membrane proton channel (subunits c, a, 8, e, f, g, k and j). These two domains are linked by a central stalk (subunits gamma, delta, and epsilon) rotating inside the F1 region and a stationary peripheral stalk (subunits F6, b, d, and OSCP). Interacts with DNAJC30; interaction is direct.

The protein resides in the mitochondrion inner membrane. It catalyses the reaction H(+)(in) = H(+)(out). Functionally, subunit a, of the mitochondrial membrane ATP synthase complex (F(1)F(0) ATP synthase or Complex V) that produces ATP from ADP in the presence of a proton gradient across the membrane which is generated by electron transport complexes of the respiratory chain. ATP synthase complex consist of a soluble F(1) head domain - the catalytic core - and a membrane F(1) domain - the membrane proton channel. These two domains are linked by a central stalk rotating inside the F(1) region and a stationary peripheral stalk. During catalysis, ATP synthesis in the catalytic domain of F(1) is coupled via a rotary mechanism of the central stalk subunits to proton translocation. With the subunit c (ATP5MC1), forms the proton-conducting channel in the F(0) domain, that contains two crucial half-channels (inlet and outlet) that facilitate proton movement from the mitochondrial intermembrane space (IMS) into the matrix. Protons are taken up via the inlet half-channel and released through the outlet half-channel, following a Grotthuss mechanism. The sequence is that of ATP synthase F(0) complex subunit a from Pan troglodytes (Chimpanzee).